Reading from the N-terminus, the 191-residue chain is Ureidoglycolate lyase (191 aa).

This sequence belongs to the ureidoglycolate lyase family. In terms of assembly, homodimer.

It carries out the reaction (S)-ureidoglycolate = urea + glyoxylate. It functions in the pathway nitrogen metabolism; (S)-allantoin degradation. Catalyzes the catabolism of the allantoin degradation intermediate (S)-ureidoglycolate, generating urea and glyoxylate. Involved in the utilization of allantoin as secondary nitrogen source when primary sources are limiting. This Schizosaccharomyces pombe (strain 972 / ATCC 24843) (Fission yeast) protein is Ureidoglycolate lyase.